A 295-amino-acid polypeptide reads, in one-letter code: Vesicle-associated protein 4-2 (295 aa).

A compositionally biased stretch (basic and acidic residues) spans 1-10; it reads MTMTEEKPTS. Positions 1–99 are disordered; sequence MTMTEEKPTS…PSPSVSSVAK (99 aa). A compositionally biased stretch (low complexity) spans 31–53; it reads NAASSAATSPFPSGASSSSTSSH. The segment covering 54–71 has biased composition (basic residues); the sequence is LHNHHQHHHQHHHQHHHQ. Polar residues predominate over residues 83–98; it reads GQNQHPTPSPSVSSVA. The region spanning 107–229 is the MSP domain; that stretch reads RLKLDPSEKL…KEQILRVIFL (123 aa). Residues 249 to 263 are compositionally biased toward basic and acidic residues; that stretch reads DAAVEARKKPPEETG. Residues 249–270 are disordered; the sequence is DAAVEARKKPPEETGPKMIGEG. A Phosphoserine modification is found at serine 294.

The protein belongs to the VAMP-associated protein (VAP) (TC 9.B.17) family.

Functionally, may play a role in vesicle trafficking. This chain is Vesicle-associated protein 4-2 (PVA42), found in Arabidopsis thaliana (Mouse-ear cress).